The following is a 1374-amino-acid chain: DNA-directed RNA polymerase subunit beta (1374 aa).

Belongs to the RNA polymerase beta chain family. The RNAP catalytic core consists of 2 alpha, 1 beta, 1 beta' and 1 omega subunit. When a sigma factor is associated with the core the holoenzyme is formed, which can initiate transcription.

It carries out the reaction RNA(n) + a ribonucleoside 5'-triphosphate = RNA(n+1) + diphosphate. DNA-dependent RNA polymerase catalyzes the transcription of DNA into RNA using the four ribonucleoside triphosphates as substrates. This chain is DNA-directed RNA polymerase subunit beta, found in Paracidovorax citrulli (strain AAC00-1) (Acidovorax citrulli).